A 232-amino-acid chain; its full sequence is dITP/XTP pyrophosphatase (232 aa).

Residue Thr-10–Lys-15 participates in substrate binding. Residue Asp-72 is the Proton acceptor of the active site. Asp-72 provides a ligand contact to Mg(2+). Residues Ser-73, Phe-153–Asp-156, Lys-176, and His-181–Arg-182 each bind substrate.

Belongs to the HAM1 NTPase family. Homodimer. It depends on Mg(2+) as a cofactor.

It catalyses the reaction XTP + H2O = XMP + diphosphate + H(+). It carries out the reaction dITP + H2O = dIMP + diphosphate + H(+). The enzyme catalyses ITP + H2O = IMP + diphosphate + H(+). Pyrophosphatase that catalyzes the hydrolysis of nucleoside triphosphates to their monophosphate derivatives, with a high preference for the non-canonical purine nucleotides XTP (xanthosine triphosphate), dITP (deoxyinosine triphosphate) and ITP. Seems to function as a house-cleaning enzyme that removes non-canonical purine nucleotides from the nucleotide pool, thus preventing their incorporation into DNA/RNA and avoiding chromosomal lesions. The protein is dITP/XTP pyrophosphatase of Syntrophobacter fumaroxidans (strain DSM 10017 / MPOB).